The sequence spans 130 residues: Fluoride-specific ion channel FluC 2 (130 aa).

The next 4 helical transmembrane spans lie at 4-24 (GLST…GAIC), 38-58 (NLWG…FFLA), 72-92 (LYLL…SLIL), and 103-123 (WMEL…FISL). Glycine 82 and serine 85 together coordinate Na(+).

It belongs to the fluoride channel Fluc/FEX (TC 1.A.43) family.

The protein localises to the cell inner membrane. It catalyses the reaction fluoride(in) = fluoride(out). With respect to regulation, na(+) is not transported, but it plays an essential structural role and its presence is essential for fluoride channel function. Fluoride-specific ion channel. Important for reducing fluoride concentration in the cell, thus reducing its toxicity. This chain is Fluoride-specific ion channel FluC 2, found in Prochlorococcus marinus (strain SARG / CCMP1375 / SS120).